We begin with the raw amino-acid sequence, 872 residues long: TATA box-binding protein-associated factor RNA polymerase I subunit B (872 aa).

The RRN7-type zinc finger occupies 6–40 (ETMQLENMHCDVCEGTTFQEREGFYYCVECGTQKD). Residues Cys15, Cys18, Cys32, and Cys35 each contribute to the Zn(2+) site. The interval 41–72 (QIRAVDITAEDNFDDTAAGRYTARTIRQKKDT) is B-reader. Positions 73 to 84 (EKEDEDDITSWE) are B-linker. The segment at 85–312 (FYNYVLRGFL…LPGNVAAKGK (228 aa)) is N-terminal cyclin fold. Residues 187–206 (DASGYRSHGGASESEGEQSL) are disordered.

It belongs to the RRN7/TAF1B family.

The protein localises to the nucleus. The protein resides in the nucleolus. Functionally, component of RNA polymerase I core factor complex that acts as a GTF2B/TFIIB-like factor and plays a key role in multiple steps during transcription initiation such as pre-initiation complex (PIC) assembly and postpolymerase recruitment events in polymerase I (Pol I) transcription. Binds rDNA promoters and plays a role in Pol I recruitment. This is TATA box-binding protein-associated factor RNA polymerase I subunit B from Drosophila melanogaster (Fruit fly).